Reading from the N-terminus, the 566-residue chain is Arginine--tRNA ligase (566 aa).

The 'HIGH' region signature appears at P123–H133.

The protein belongs to the class-I aminoacyl-tRNA synthetase family. As to quaternary structure, monomer.

It localises to the cytoplasm. It catalyses the reaction tRNA(Arg) + L-arginine + ATP = L-arginyl-tRNA(Arg) + AMP + diphosphate. This Clostridioides difficile (strain 630) (Peptoclostridium difficile) protein is Arginine--tRNA ligase.